A 630-amino-acid polypeptide reads, in one-letter code: 1-deoxy-D-xylulose-5-phosphate synthase (630 aa).

Residues His-87 and 128–130 (GHS) contribute to the thiamine diphosphate site. Asp-159 is a binding site for Mg(2+). Thiamine diphosphate is bound by residues 160–161 (GA), Asn-188, Phe-295, and Glu-377. Residue Asn-188 coordinates Mg(2+).

This sequence belongs to the transketolase family. DXPS subfamily. Homodimer. It depends on Mg(2+) as a cofactor. Requires thiamine diphosphate as cofactor.

The enzyme catalyses D-glyceraldehyde 3-phosphate + pyruvate + H(+) = 1-deoxy-D-xylulose 5-phosphate + CO2. It functions in the pathway metabolic intermediate biosynthesis; 1-deoxy-D-xylulose 5-phosphate biosynthesis; 1-deoxy-D-xylulose 5-phosphate from D-glyceraldehyde 3-phosphate and pyruvate: step 1/1. In terms of biological role, catalyzes the acyloin condensation reaction between C atoms 2 and 3 of pyruvate and glyceraldehyde 3-phosphate to yield 1-deoxy-D-xylulose-5-phosphate (DXP). The protein is 1-deoxy-D-xylulose-5-phosphate synthase of Pseudomonas savastanoi pv. phaseolicola (strain 1448A / Race 6) (Pseudomonas syringae pv. phaseolicola (strain 1448A / Race 6)).